Here is a 691-residue protein sequence, read N- to C-terminus: NADPH--cytochrome P450 reductase (691 aa).

At 2–7 the chain is on the lumenal side; it reads PFGIDN. A helical transmembrane segment spans residues 8–24; that stretch reads TDFTVLAGLVLAVLLYV. The Cytoplasmic segment spans residues 25–691; that stretch reads KRNSIKELLM…TSGRYQEDVW (667 aa). Residues 61 to 204 enclose the Flavodoxin-like domain; that stretch reads YLVLYASQTG…DYMAWKDSIL (144 aa). FMN is bound by residues 67–72, Lys78, 116–119, 152–161, and Asp187; these read SQTGTA, STYG, and LGNSTYEFFN. An FAD-binding FR-type domain is found at 266–529; that stretch reads SQPYIAPIVK…HVRRSNFRLP (264 aa). Arg285 is an NADP(+) binding site. FAD-binding positions include 439-442, 457-459, and 476-479; these read RYYS, TSI, and GVTT. NADP(+) is bound by residues Thr543, 610–611, 617–621, and Asp646; these read SR and KVYVQ. Residue Lys666 forms a Glycyl lysine isopeptide (Lys-Gly) (interchain with G-Cter in ubiquitin) linkage. Residue Trp691 coordinates FAD.

The protein belongs to the NADPH--cytochrome P450 reductase family. In the N-terminal section; belongs to the flavodoxin family. This sequence in the C-terminal section; belongs to the flavoprotein pyridine nucleotide cytochrome reductase family. As to quaternary structure, interacts with PCL1. Requires FAD as cofactor. FMN serves as cofactor. Phosphorylated by the cyclin-CDK PCL1-PHO85.

It is found in the endoplasmic reticulum membrane. The protein localises to the mitochondrion outer membrane. The protein resides in the cell membrane. It catalyses the reaction 2 oxidized [cytochrome P450] + NADPH = 2 reduced [cytochrome P450] + NADP(+) + H(+). Functionally, this enzyme is required for electron transfer from NADP to cytochrome P450 in microsomes. It can also provide electron transfer to heme oxygenase and cytochrome B5. Involved in ergosterol biosynthesis. Has NADPH-dependent ferrireductase activity on the plasma membrane. This Saccharomyces cerevisiae (strain ATCC 204508 / S288c) (Baker's yeast) protein is NADPH--cytochrome P450 reductase.